The sequence spans 389 residues: tRNA(Met) cytidine acetate ligase (389 aa).

ATP contacts are provided by residues 8-21, G97, N153, and R176; that span reads IAEF…HEYL.

Belongs to the TmcAL family.

It is found in the cytoplasm. It carries out the reaction cytidine(34) in elongator tRNA(Met) + acetate + ATP = N(4)-acetylcytidine(34) in elongator tRNA(Met) + AMP + diphosphate. Functionally, catalyzes the formation of N(4)-acetylcytidine (ac(4)C) at the wobble position of elongator tRNA(Met), using acetate and ATP as substrates. First activates an acetate ion to form acetyladenylate (Ac-AMP) and then transfers the acetyl group to tRNA to form ac(4)C34. In Lactococcus lactis subsp. cremoris (strain SK11), this protein is tRNA(Met) cytidine acetate ligase.